The chain runs to 240 residues: Uridylate kinase (240 aa).

13–16 (KLSG) serves as a coordination point for ATP. An involved in allosteric activation by GTP region spans residues 21–26 (GDDGFG). Residue glycine 55 participates in UMP binding. Residues glycine 56 and arginine 60 each coordinate ATP. UMP-binding positions include aspartate 75 and 136 to 143 (IGNPYFST). ATP contacts are provided by asparagine 164, tyrosine 170, and aspartate 173.

Belongs to the UMP kinase family. In terms of assembly, homohexamer.

The protein localises to the cytoplasm. The catalysed reaction is UMP + ATP = UDP + ADP. Its pathway is pyrimidine metabolism; CTP biosynthesis via de novo pathway; UDP from UMP (UMPK route): step 1/1. Its activity is regulated as follows. Allosterically activated by GTP. Inhibited by UTP. Catalyzes the reversible phosphorylation of UMP to UDP. This chain is Uridylate kinase, found in Staphylococcus saprophyticus subsp. saprophyticus (strain ATCC 15305 / DSM 20229 / NCIMB 8711 / NCTC 7292 / S-41).